A 748-amino-acid chain; its full sequence is MVLLRVLILLLSWVAGLGGQYGNPLNKYIRHYEGLSYDVDSLHQKHQRAKRAVSHEDQFLRLDFHAHGRHFNLRMKRDTSLFSEEFRVETSNAVLDYDTSHIYTGHIYGEEGSFSHGSVIDGRFEGFIQTHGGTFYVEPAERYIKDRTLPFHSVIYHEDDIKYPHKYGPQGGCADHSVFERMRKYQMTGVEEVTQTPQEKHAINGPELLRKKRTTVAEKNTCQLYIQTDHLFFKYYGTREAVIAQISSHVKAIDTIYQTTDFSGIRNISFMVKRIRINTTADEKDPTNPFRFPNIGVEKFLELNSEQNHDDYCLAYVFTDRDFDDGVLGLAWVGAPSGSSGGICEKSKLYSDGKKKSLNTGIITVQNYGSHVPPKVSHITFAHEVGHNFGSPHDSGTECTPGESKNLGQKENGNYIMYARATSGDKLNNNKFSLCSIRNISQVLEKKRNNCFVESGQPICGNGMVEQGEECDCGYSDQCKDECCYDANQPEGKKCKLKPGKQCSPSQGPCCTAHCAFKSKTEKCRDDSDCAKEGICNGITALCPASDPKPNFTDCNRHTQVCINGQCAGSICEKHGLEECTCASSDGKDDKELCHVCCMKKMEPSTCASTGSVQWNKYFLGRTITLQPGSPCNDFRGYCDVFMRCRLVDADGPLARLKKAIFSPELYENIAEWIVAYWWAVLLMGIALIMLMAGFIKICSVHTPSSNPKLPPPKPLPGTLKRRRPPQPIQQPQRQRPRESYQMGHMRR.

Positions 1-19 (MVLLRVLILLLSWVAGLGG) are cleaved as a signal peptide. A propeptide spanning residues 20 to 213 (QYGNPLNKYI…NGPELLRKKR (194 aa)) is cleaved from the precursor. Topologically, residues 20–672 (QYGNPLNKYI…SPELYENIAE (653 aa)) are extracellular. A Cysteine switch motif is present at residues 171 to 178 (GGCADHSV). Cysteine 173 contributes to the Zn(2+) binding site. The Peptidase M12B domain maps to 220–456 (NTCQLYIQTD…KRNNCFVESG (237 aa)). Residues asparagine 267 and asparagine 278 are each glycosylated (N-linked (GlcNAc...) asparagine). Cystine bridges form between cysteine 344/cysteine 451, cysteine 399/cysteine 435, cysteine 460/cysteine 495, cysteine 471/cysteine 484, cysteine 473/cysteine 479, cysteine 483/cysteine 515, cysteine 503/cysteine 511, cysteine 510/cysteine 536, cysteine 524/cysteine 543, cysteine 530/cysteine 562, cysteine 555/cysteine 567, cysteine 572/cysteine 598, cysteine 580/cysteine 607, cysteine 582/cysteine 597, cysteine 594/cysteine 639, and cysteine 632/cysteine 645. Histidine 383 is a binding site for Zn(2+). Glutamate 384 is a catalytic residue. Residues histidine 387 and histidine 393 each coordinate Zn(2+). Residue asparagine 439 is glycosylated (N-linked (GlcNAc...) asparagine). One can recognise a Disintegrin domain in the interval 457 to 551 (QPICGNGMVE…LCPASDPKPN (95 aa)). An N-linked (GlcNAc...) asparagine glycan is attached at asparagine 551. Residues 673-696 (WIVAYWWAVLLMGIALIMLMAGFI) traverse the membrane as a helical segment. Topologically, residues 697-748 (KICSVHTPSSNPKLPPPKPLPGTLKRRRPPQPIQQPQRQRPRESYQMGHMRR) are cytoplasmic. Positions 704 to 748 (PSSNPKLPPPKPLPGTLKRRRPPQPIQQPQRQRPRESYQMGHMRR) are disordered. Residues 708–715 (PKLPPPKP) carry the SH3-binding motif. Threonine 719 carries the phosphothreonine modification. Residues 722 to 728 (RRRPPQP) carry the SH3-binding motif. Positions 734-748 (RQRPRESYQMGHMRR) are interaction with AP2A1, AP2A2 and AP2M1.

In terms of assembly, forms a ternary EFNA5-EPHA3-ADAM10 complex mediating EFNA5 extracellular domain shedding by ADAM10 which regulates the EFNA5-EPHA3 complex internalization and function, the cleavage occurs in trans, with ADAM10 and its substrate being on the membranes of opposing cells. Interacts with the clathrin adapter AP2 complex subunits AP2A1, AP2A2, AP2B1, and AP2M1; this interaction facilitates ADAM10 endocytosis from the plasma membrane during long-term potentiation in hippocampal neurons. Forms a ternary complex composed of ADAM10, EPHA4 and CADH1; within the complex, ADAM10 cleaves CADH1 which disrupts adherens junctions. Interacts with EPHA2. Interacts with NGF in a divalent cation-dependent manner. Interacts with TSPAN14; the interaction promotes ADAM10 maturation and cell surface expression. Interacts with TSPAN5, TSPAN10, TSPAN14, TSPAN15, TSPAN17 and TSPAN33; these interactions regulate ADAM10 substrate specificity, endocytosis and turnover. Interacts (via extracellular domain) with TSPAN33 (via extracellular domain) and (via cytoplasmic domain) with AFDN; interaction with TSPAN33 allows the docking of ADAM10 to zonula adherens through a PDZ11-dependent interaction between TSPAN33 and PLEKHA7 while interaction with AFDN locks ADAM10 at zonula adherens. Interacts with DLG1; this interaction recruits ADAM10 to the cell membrane during long-term depression in hippocampal neurons. Interacts (via extracellular domain) with BACE1 (via extracellular domain). Interacts with FAM171A1. It depends on Zn(2+) as a cofactor. The precursor is cleaved by furin and PCSK7. Expressed at low level in kidney, spleen, lung, adrenal, heart and peripheral nerve.

It localises to the golgi apparatus membrane. The protein localises to the cell membrane. It is found in the cytoplasmic vesicle. Its subcellular location is the clathrin-coated vesicle. The protein resides in the cell projection. It localises to the axon. The protein localises to the dendrite. It is found in the cell junction. Its subcellular location is the adherens junction. The protein resides in the cytoplasm. It carries out the reaction Endopeptidase of broad specificity.. With respect to regulation, catalytically inactive when the propeptide is intact and associated with the mature enzyme. The disintegrin and cysteine-rich regions modulate access of substrates to exerts an inhibitory effect on the cleavage of ADAM10 substrates. In terms of biological role, transmembrane metalloprotease which mediates the ectodomain shedding of a myriad of transmembrane proteins, including adhesion proteins, growth factor precursors and cytokines being essential for development and tissue homeostasis. Associates with six members of the tetraspanin superfamily TspanC8 which regulate its exit from the endoplasmic reticulum and its substrate selectivity. Cleaves the membrane-bound precursor of TNF-alpha at '76-Ala-|-Val-77' to its mature soluble form. Responsible for the proteolytical release of soluble JAM3 from endothelial cells surface. Responsible for the proteolytic release of several other cell-surface proteins, including heparin-binding epidermal growth-like factor, ephrin-A2, CD44, CDH2 and for constitutive and regulated alpha-secretase cleavage of amyloid precursor protein (APP). Contributes to the normal cleavage of the cellular prion protein. Involved in the cleavage of the adhesion molecule L1 at the cell surface and in released membrane vesicles, suggesting a vesicle-based protease activity. Also controls the proteolytic processing of Notch and mediates lateral inhibition during neurogenesis. Required for the development of type 1 transitional B cells into marginal zone B cells, probably by cleaving Notch. Responsible for the FasL ectodomain shedding and for the generation of the remnant ADAM10-processed FasL (FasL APL) transmembrane form. Also cleaves the ectodomain of the integral membrane proteins CORIN and ITM2B. Mediates the proteolytic cleavage of LAG3, leading to release the secreted form of LAG3. Mediates the proteolytic cleavage of IL6R and IL11RA, leading to the release of secreted forms of IL6R and IL11RA. Enhances the cleavage of CHL1 by BACE1. Cleaves NRCAM. Cleaves TREM2, resulting in shedding of the TREM2 ectodomain. Involved in the development and maturation of glomerular and coronary vasculature. During development of the cochlear organ of Corti, promotes pillar cell separation by forming a ternary complex with CADH1 and EPHA4 and cleaving CADH1 at adherens junctions. May regulate the EFNA5-EPHA3 signaling. Regulates leukocyte transmigration as a sheddase for the adherens junction protein VE-cadherin/CDH5 in endothelial cells. The chain is Disintegrin and metalloproteinase domain-containing protein 10 (ADAM10) from Bos taurus (Bovine).